A 463-amino-acid polypeptide reads, in one-letter code: Phosphomethylpyrimidine synthase (463 aa).

Substrate-binding positions include Asn80, Met109, Tyr138, His173, 193-195, 234-237, and Glu273; these read SRG and DGLR. His277 provides a ligand contact to Zn(2+). Residue Tyr300 coordinates substrate. A Zn(2+)-binding site is contributed by His341. The [4Fe-4S] cluster site is built by Cys421, Cys424, and Cys429.

The protein belongs to the ThiC family. As to quaternary structure, homodimer. The cofactor is [4Fe-4S] cluster.

The enzyme catalyses 5-amino-1-(5-phospho-beta-D-ribosyl)imidazole + S-adenosyl-L-methionine = 4-amino-2-methyl-5-(phosphooxymethyl)pyrimidine + CO + 5'-deoxyadenosine + formate + L-methionine + 3 H(+). Its pathway is cofactor biosynthesis; thiamine diphosphate biosynthesis. Its function is as follows. Catalyzes the synthesis of the hydroxymethylpyrimidine phosphate (HMP-P) moiety of thiamine from aminoimidazole ribotide (AIR) in a radical S-adenosyl-L-methionine (SAM)-dependent reaction. The chain is Phosphomethylpyrimidine synthase from Anaeromyxobacter sp. (strain K).